The primary structure comprises 434 residues: Enolase (434 aa).

Position 41 (alanine 41) interacts with phosphoenolpyruvate. Glutamine 165 is a binding site for (2R)-2-phosphoglycerate. The active-site Proton donor is glutamate 207. Aspartate 244, glutamate 291, and aspartate 318 together coordinate Mg(2+). Lysine 343, arginine 372, serine 373, and lysine 394 together coordinate phosphoenolpyruvate. 4 residues coordinate (2R)-2-phosphoglycerate: lysine 343, arginine 372, serine 373, and lysine 394. Lysine 343 (proton acceptor) is an active-site residue.

The protein belongs to the enolase family. As to quaternary structure, homodimer and homooctamer; the homodimer is inactive. Requires Mg(2+) as cofactor.

The protein resides in the cytoplasm. It is found in the secreted. Its subcellular location is the cell surface. The catalysed reaction is (2R)-2-phosphoglycerate = phosphoenolpyruvate + H2O. The protein operates within carbohydrate degradation; glycolysis; pyruvate from D-glyceraldehyde 3-phosphate: step 4/5. Catalyzes the reversible conversion of 2-phosphoglycerate (2-PG) into phosphoenolpyruvate (PEP). It is essential for the degradation of carbohydrates via glycolysis. In terms of biological role, 'Moonlights' as a laminin receptor. Binds laminin when expressed on the bacterial cell surface; this probably induces destruction of the extracellular matrix, favoring invasion and dissemination. The protein is Enolase of Staphylococcus aureus.